The chain runs to 814 residues: Leucine-rich repeat-containing protein 41 (814 aa).

The segment at 45–54 (ALFELCGRAV) is interaction with Elongin BC complex. Serine 155, serine 276, and serine 326 each carry phosphoserine. Residues 265–408 (LCGEASRGRA…KKGARTRQGC (144 aa)) form a disordered region. Threonine 327 is subject to Phosphothreonine. Positions 354–385 (TKRPPSAPATTSSASASSSTSSSKRAPASSAP) are enriched in low complexity. Serine 375 bears the Phosphoserine mark. The segment covering 389–403 (PLKRFKRAAGKKGAR) has biased composition (basic residues). LRR repeat units lie at residues 489–509 (WVSLESLTLSYNGLGSNIFRL), 520–532 (AGCRLRALHLSDL), 533–557 (FSPLPILELTRAIVRALPLLRVLSI), 615–637 (SGSLQQLSLDSATFASPQDFGLV), 638–661 (LQTLKEYNLTLKRLSFHDMNLADC), 703–730 (NSTLKGLRLPGNRLGNAGLLALADVFSE), and 733–754 (SSSLCQLDISSNCIKPDGLLEF).

Part of a E3 ubiquitin ligase complex with elongin BC complex (ELOB and ELOC), RBX1 and CUL5.

This chain is Leucine-rich repeat-containing protein 41 (LRRC41), found in Bos taurus (Bovine).